A 430-amino-acid chain; its full sequence is Adenylosuccinate synthetase (430 aa).

GTP-binding positions include 12 to 18 (GDEGKGK) and 40 to 42 (GHT). The active-site Proton acceptor is the Asp13. Asp13 and Gly40 together coordinate Mg(2+). IMP-binding positions include 13-16 (DEGK), 38-41 (NAGH), Thr128, Arg142, Gln223, Thr238, and Arg302. His41 functions as the Proton donor in the catalytic mechanism. 298 to 304 (TTTGRPR) serves as a coordination point for substrate. GTP contacts are provided by residues Arg304, 330–332 (LLD), and 412–414 (SVG).

The protein belongs to the adenylosuccinate synthetase family. As to quaternary structure, homodimer. It depends on Mg(2+) as a cofactor.

It is found in the cytoplasm. The enzyme catalyses IMP + L-aspartate + GTP = N(6)-(1,2-dicarboxyethyl)-AMP + GDP + phosphate + 2 H(+). It participates in purine metabolism; AMP biosynthesis via de novo pathway; AMP from IMP: step 1/2. Functionally, plays an important role in the de novo pathway of purine nucleotide biosynthesis. Catalyzes the first committed step in the biosynthesis of AMP from IMP. The chain is Adenylosuccinate synthetase from Listeria monocytogenes serotype 4b (strain CLIP80459).